The chain runs to 463 residues: Glycine--tRNA ligase (463 aa).

2 residues coordinate substrate: Arg-98 and Glu-174. ATP contacts are provided by residues 206-208 (RNE), 216-221 (FRTREF), 290-291 (EL), and 334-337 (GADR). 221–225 (FEQME) provides a ligand contact to substrate. 330–334 (EPSLG) contributes to the substrate binding site.

It belongs to the class-II aminoacyl-tRNA synthetase family. As to quaternary structure, homodimer.

It is found in the cytoplasm. The enzyme catalyses tRNA(Gly) + glycine + ATP = glycyl-tRNA(Gly) + AMP + diphosphate. Functionally, catalyzes the attachment of glycine to tRNA(Gly). This chain is Glycine--tRNA ligase, found in Staphylococcus aureus (strain bovine RF122 / ET3-1).